A 54-amino-acid chain; its full sequence is Large ribosomal subunit protein bL32c (54 aa).

Positions 1–20 (MAVPKKKMSKSRRNSRKSNW) are disordered.

This sequence belongs to the bacterial ribosomal protein bL32 family.

It is found in the plastid. It localises to the chloroplast. The polypeptide is Large ribosomal subunit protein bL32c (rpl32) (Euglena gracilis).